Consider the following 396-residue polypeptide: Ornithine aminotransferase 2 (396 aa).

Lys-255 bears the N6-(pyridoxal phosphate)lysine mark.

This sequence belongs to the class-III pyridoxal-phosphate-dependent aminotransferase family. OAT subfamily. The cofactor is pyridoxal 5'-phosphate.

The protein localises to the cytoplasm. The catalysed reaction is a 2-oxocarboxylate + L-ornithine = L-glutamate 5-semialdehyde + an L-alpha-amino acid. Its pathway is amino-acid biosynthesis; L-proline biosynthesis; L-glutamate 5-semialdehyde from L-ornithine: step 1/1. In terms of biological role, catalyzes the interconversion of ornithine to glutamate semialdehyde. The protein is Ornithine aminotransferase 2 of Staphylococcus aureus (strain COL).